A 334-amino-acid chain; its full sequence is DGAT1/2-independent enzyme synthesizing storage lipids (334 aa).

The Lumenal segment spans residues 1-50 (MTNKNQSFGVGQDSMSSMTCLIHVLEAWFGVEHLEDYWNFANYLLWVFTP). Asparagine 5 carries N-linked (GlcNAc...) asparagine glycosylation. Residues 51-71 (LLLLILPYFTIFLLYLTIIFL) form a helical membrane-spanning segment. Residues 72-125 (HIYKRKNVLKEAYSHNLWDGARKTVATLWDGHAAVWHGYEVHGMEKIPEEGPAL) are Cytoplasmic-facing. A helical transmembrane segment spans residues 126-146 (IIFYHGAIPIDFYYFMAKIFI). Histidine 130 is an active-site residue. Over 147 to 334 (HKGRTCRVVA…NKQKINQKTL (188 aa)) the chain is Lumenal.

Belongs to the diacylglycerol acyltransferase family. Highly divergent.

It localises to the endoplasmic reticulum membrane. The catalysed reaction is a 1,2-diacylglycerol + a 1,2-diacyl-sn-glycero-3-phosphocholine = a triacylglycerol + a 1-acyl-sn-glycero-3-phosphocholine. It catalyses the reaction a 1-O-alkyl-2-acyl-sn-glycero-3-phosphocholine + a 1,2-diacylglycerol = a 1-O-alkyl-sn-glycero-3-phosphocholine + a triacylglycerol. It carries out the reaction a 2-acylglycerol + an acyl-CoA = a 1,2-diacylglycerol + CoA. The enzyme catalyses an acyl-CoA + a 1,2-diacyl-sn-glycerol = a triacyl-sn-glycerol + CoA. The catalysed reaction is 2-(9Z-octadecenoyl)-glycerol + (9Z)-octadecenoyl-CoA = 1,2-di-(9Z-octadecenoyl)-glycerol + CoA. It catalyses the reaction 1,2-di-(9Z-octadecenoyl)-sn-glycerol + (9Z)-octadecenoyl-CoA = 1,2,3-tri-(9Z-octadecenoyl)-glycerol + CoA. With respect to regulation, acyltransferase activity is specifically inhibited by TMX1 at the endoplasmic reticulum, restricting accumulation of triacylglycerol. Functionally, catalytic subunit of the alternative triglyceride biosynthesis pathway, which mediates formation of triacylglycerol from diacylglycerol and membrane phospholipids. Synthesizes triacylglycerol at the expense of membrane phospholipids, such as phosphatidylcholine (PC) and its ether-linked form (ePC), thereby altering the composition of membranes. The alternative triglyceride biosynthesis pathway is probably required to provide the energy required for rapid growth when fuel sources are limiting. It maintains mitochondrial function during periods of extracellular lipid starvation. Can also use acyl-CoA as donor: acts as a acyl-CoA:monoacylglycerol acyltransferase (MGAT), but also shows acyl-CoA:diacylglycerol acyltransferase (DGAT) activity. This is DGAT1/2-independent enzyme synthesizing storage lipids (TMEM68) from Bos taurus (Bovine).